Reading from the N-terminus, the 450-residue chain is Divalent metal cation transporter MntH (450 aa).

The next 11 helical transmembrane spans lie at 34 to 54, 59 to 81, 108 to 128, 141 to 161, 170 to 190, 212 to 232, 263 to 283, 305 to 325, 361 to 381, 383 to 403, and 422 to 442; these read LSFL…GNWI, GGAQ…AMLL, IAII…IAEV, IPLI…LFIM, AIVG…VYIS, GILY…NLYL, IQLS…ASLF, PVLG…ALLA, SLAV…AAKI, QLLV…LIPL, and VNII…YLIV.

It belongs to the NRAMP family.

It localises to the cell membrane. In terms of biological role, h(+)-stimulated, divalent metal cation uptake system. In Staphylococcus aureus (strain MRSA252), this protein is Divalent metal cation transporter MntH.